The following is a 350-amino-acid chain: Holliday junction branch migration complex subunit RuvB (350 aa).

The tract at residues Met1–Tyr184 is large ATPase domain (RuvB-L). ATP-binding positions include Leu23, Arg24, Gly65, Lys68, Thr69, Thr70, Glu131–Phe133, Arg174, Tyr184, and Arg221. Thr69 contributes to the Mg(2+) binding site. Positions Thr185 to Asp255 are small ATPAse domain (RuvB-S). Residues Pro258–Asp350 form a head domain (RuvB-H) region. Residues Arg294, Arg313, and Arg318 each coordinate DNA.

Belongs to the RuvB family. As to quaternary structure, homohexamer. Forms an RuvA(8)-RuvB(12)-Holliday junction (HJ) complex. HJ DNA is sandwiched between 2 RuvA tetramers; dsDNA enters through RuvA and exits via RuvB. An RuvB hexamer assembles on each DNA strand where it exits the tetramer. Each RuvB hexamer is contacted by two RuvA subunits (via domain III) on 2 adjacent RuvB subunits; this complex drives branch migration. In the full resolvosome a probable DNA-RuvA(4)-RuvB(12)-RuvC(2) complex forms which resolves the HJ.

It is found in the cytoplasm. The enzyme catalyses ATP + H2O = ADP + phosphate + H(+). Its function is as follows. The RuvA-RuvB-RuvC complex processes Holliday junction (HJ) DNA during genetic recombination and DNA repair, while the RuvA-RuvB complex plays an important role in the rescue of blocked DNA replication forks via replication fork reversal (RFR). RuvA specifically binds to HJ cruciform DNA, conferring on it an open structure. The RuvB hexamer acts as an ATP-dependent pump, pulling dsDNA into and through the RuvAB complex. RuvB forms 2 homohexamers on either side of HJ DNA bound by 1 or 2 RuvA tetramers; 4 subunits per hexamer contact DNA at a time. Coordinated motions by a converter formed by DNA-disengaged RuvB subunits stimulates ATP hydrolysis and nucleotide exchange. Immobilization of the converter enables RuvB to convert the ATP-contained energy into a lever motion, pulling 2 nucleotides of DNA out of the RuvA tetramer per ATP hydrolyzed, thus driving DNA branch migration. The RuvB motors rotate together with the DNA substrate, which together with the progressing nucleotide cycle form the mechanistic basis for DNA recombination by continuous HJ branch migration. Branch migration allows RuvC to scan DNA until it finds its consensus sequence, where it cleaves and resolves cruciform DNA. This is Holliday junction branch migration complex subunit RuvB from Beijerinckia indica subsp. indica (strain ATCC 9039 / DSM 1715 / NCIMB 8712).